Consider the following 135-residue polypeptide: Protein E6 (135 aa).

Zinc fingers lie at residues 23-59 (CTFC…CTAC) and 96-132 (CRVC…CRIC).

This sequence belongs to the papillomaviridae E6 protein family. As to quaternary structure, forms homodimers. Interacts with ubiquitin-protein ligase UBE3A/E6-AP; this interaction stimulates UBE3A ubiquitin activity. Interacts with host BAK1.

The protein localises to the host cytoplasm. Its subcellular location is the host nucleus. Plays a major role in the induction and maintenance of cellular transformation. E6 associates with host UBE3A/E6-AP ubiquitin-protein ligase and modulates its activity. Protects host keratinocytes from apoptosis by mediating the degradation of host BAK1. May also inhibit host immune response. The polypeptide is Protein E6 (Mastomys natalensis papillomavirus (isolate African multimammate rat) (MnPV)).